The chain runs to 1134 residues: Ubinuclein-1 (1134 aa).

Disordered regions lie at residues 1 to 38 (MSEP…HQDC) and 78 to 98 (LQPG…EKER). Positions 1 to 166 (MSEPHRVQFT…YGGFYINSGT (166 aa)) are sufficient for interaction with HIRA. 2 stretches are compositionally biased toward basic and acidic residues: residues 25–38 (RKEE…HQDC) and 81–98 (GDKK…EKER). Position 166 is a phosphothreonine (T166). Positions 171-220 (QASESEDDFIKEKKKKSPKKRKLKEGGEKIKKKKKDDTYDKEKKSKKSKF) are disordered. Residues S173 and S175 each carry the phosphoserine modification. Over residues 182-193 (EKKKKSPKKRKL) the composition is skewed to basic residues. Residues 194-213 (KEGGEKIKKKKKDDTYDKEK) show a composition bias toward basic and acidic residues. N6-acetyllysine is present on K222. Residues 253–268 (QKEKEAQKKREEEHKP) show a composition bias toward basic and acidic residues. Disordered regions lie at residues 253 to 282 (QKEK…LREL), 321 to 358 (SESP…EGLP), 480 to 504 (EEEK…KGGR), and 594 to 660 (PSKI…LEDS). A phosphoserine mark is found at S323, S336, S338, and S493. The stretch at 479-542 (LEEEKDKEQR…SQDLERNNKA (64 aa)) forms a coiled coil. Composition is skewed to basic and acidic residues over residues 480–493 (EEEK…RICS) and 598–610 (KVKE…DKKV). Phosphoserine occurs at positions 660 and 677. Disordered stretches follow at residues 712–836 (TEEK…SPTQ) and 852–986 (QGFH…GVAK). Composition is skewed to low complexity over residues 792 to 804 (GPQV…GPQV) and 856 to 891 (PSAP…KPHS). The segment covering 892 to 905 (VSSAGSSYKNNPFA) has biased composition (polar residues). Low complexity predominate over residues 906-932 (SSISKHGVSSGSSSSGGTPVQSSVSGS). The span at 941–950 (SVGQATSRPV) shows a compositional bias: polar residues. Positions 973–982 (PNGDSSGGTQ) are enriched in gly residues. S1025 is subject to Phosphoserine. Residues 1093 to 1108 (GLHSSPPHAAPLPHAA) are compositionally biased toward low complexity. Positions 1093–1134 (GLHSSPPHAAPLPHAAVPTHIPQSLPGASQLHGKGPAVPRKL) are disordered.

Belongs to the ubinuclein family. In terms of assembly, component of a complex that includes at least ASF1A, CABIN1, HIRA, histone H3.3 and UBN1. Interacts with HIRA (via WD repeat domain); the interaction is direct. Interacts with ASF1A, CEBPA, TJP1, TJP2 and TJP3. (Microbial infection) Interacts with Epstein-Barr virus BZLF1. In terms of tissue distribution, ubiquitous. Also expressed in numerous tumors and cancer cell lines.

It localises to the nucleus. The protein localises to the nucleoplasm. Its subcellular location is the PML body. The protein resides in the cell junction. It is found in the tight junction. Acts as a novel regulator of senescence. Involved in the formation of senescence-associated heterochromatin foci (SAHF), which represses expression of proliferation-promoting genes. Binds to proliferation-promoting genes. May be required for replication-independent chromatin assembly. The polypeptide is Ubinuclein-1 (UBN1) (Homo sapiens (Human)).